A 55-amino-acid chain; its full sequence is Seripauperin-7 (55 aa).

The first 20 residues, 1 to 20, serve as a signal peptide directing secretion; that stretch reads MVKLTSIAAGVAAIAAGASA.

This sequence belongs to the SRP1/TIP1 family. Seripauperin subfamily.

The sequence is that of Seripauperin-7 (PAU7) from Saccharomyces cerevisiae (strain ATCC 204508 / S288c) (Baker's yeast).